A 244-amino-acid chain; its full sequence is Small ribosomal subunit protein eS4 (244 aa).

The S4 RNA-binding domain maps to 43-106 (LPLLLVVRDV…DETYLVLFDE (64 aa)).

The protein belongs to the eukaryotic ribosomal protein eS4 family.

The sequence is that of Small ribosomal subunit protein eS4 from Methanococcus maripaludis (strain DSM 14266 / JCM 13030 / NBRC 101832 / S2 / LL).